The sequence spans 261 residues: Indole-3-glycerol phosphate synthase (261 aa).

Belongs to the TrpC family.

The enzyme catalyses 1-(2-carboxyphenylamino)-1-deoxy-D-ribulose 5-phosphate + H(+) = (1S,2R)-1-C-(indol-3-yl)glycerol 3-phosphate + CO2 + H2O. The protein operates within amino-acid biosynthesis; L-tryptophan biosynthesis; L-tryptophan from chorismate: step 4/5. The polypeptide is Indole-3-glycerol phosphate synthase (Burkholderia lata (strain ATCC 17760 / DSM 23089 / LMG 22485 / NCIMB 9086 / R18194 / 383)).